The primary structure comprises 226 residues: Cytidylate kinase (226 aa).

Residue 10 to 18 (GPAGAGKST) participates in ATP binding.

Belongs to the cytidylate kinase family. Type 1 subfamily.

The protein resides in the cytoplasm. It carries out the reaction CMP + ATP = CDP + ADP. It catalyses the reaction dCMP + ATP = dCDP + ADP. This Caldicellulosiruptor bescii (strain ATCC BAA-1888 / DSM 6725 / KCTC 15123 / Z-1320) (Anaerocellum thermophilum) protein is Cytidylate kinase.